A 344-amino-acid polypeptide reads, in one-letter code: Coproporphyrin III ferrochelatase (344 aa).

Position 52 (Ser52) interacts with Fe-coproporphyrin III. A [2Fe-2S] cluster-binding site is contributed by Cys113. Tyr116 contributes to the Fe-coproporphyrin III binding site. Fe(2+) is bound by residues His172 and Glu255. The [2Fe-2S] cluster site is built by Cys316, Cys325, and Cys330.

The protein belongs to the ferrochelatase family. It depends on [2Fe-2S] cluster as a cofactor.

Its subcellular location is the cytoplasm. The enzyme catalyses Fe-coproporphyrin III + 2 H(+) = coproporphyrin III + Fe(2+). The protein operates within porphyrin-containing compound metabolism; protoheme biosynthesis. Functionally, involved in coproporphyrin-dependent heme b biosynthesis. Catalyzes the insertion of ferrous iron into coproporphyrin III to form Fe-coproporphyrin III. The protein is Coproporphyrin III ferrochelatase of Mycobacterium bovis (strain ATCC BAA-935 / AF2122/97).